A 324-amino-acid polypeptide reads, in one-letter code: Glyoxylate/hydroxypyruvate reductase B (324 aa).

Catalysis depends on residues Arg-237 and Glu-266. The Proton donor role is filled by His-285.

This sequence belongs to the D-isomer specific 2-hydroxyacid dehydrogenase family. GhrB subfamily. Homodimer.

The protein resides in the cytoplasm. The catalysed reaction is glycolate + NADP(+) = glyoxylate + NADPH + H(+). It catalyses the reaction (R)-glycerate + NAD(+) = 3-hydroxypyruvate + NADH + H(+). The enzyme catalyses (R)-glycerate + NADP(+) = 3-hydroxypyruvate + NADPH + H(+). In terms of biological role, catalyzes the NADPH-dependent reduction of glyoxylate and hydroxypyruvate into glycolate and glycerate, respectively. The sequence is that of Glyoxylate/hydroxypyruvate reductase B from Escherichia coli (strain K12 / MC4100 / BW2952).